Consider the following 371-residue polypeptide: MSL complex subunit 3B (371 aa).

2 disordered regions span residues M1–D44 and E160–A229. The span at P8–D44 shows a compositional bias: basic and acidic residues. The 324-residue stretch at D44–P367 folds into the MRG domain. Residues A206–H216 show a composition bias toward basic residues.

The protein resides in the nucleus. Its function is as follows. Probable non-catalytic component of the MSL histone acetyltransferase complex, a multiprotein complex that mediates the majority of histone H4 acetylation at 'Lys-16' (H4K16ac), an epigenetic mark that prevents chromatin compaction. The protein is MSL complex subunit 3B of Rattus norvegicus (Rat).